A 257-amino-acid polypeptide reads, in one-letter code: Imidazole glycerol phosphate synthase subunit HisF (257 aa).

Catalysis depends on residues Asp-11 and Asp-130.

Belongs to the HisA/HisF family. Heterodimer of HisH and HisF.

It is found in the cytoplasm. The catalysed reaction is 5-[(5-phospho-1-deoxy-D-ribulos-1-ylimino)methylamino]-1-(5-phospho-beta-D-ribosyl)imidazole-4-carboxamide + L-glutamine = D-erythro-1-(imidazol-4-yl)glycerol 3-phosphate + 5-amino-1-(5-phospho-beta-D-ribosyl)imidazole-4-carboxamide + L-glutamate + H(+). It participates in amino-acid biosynthesis; L-histidine biosynthesis; L-histidine from 5-phospho-alpha-D-ribose 1-diphosphate: step 5/9. Its function is as follows. IGPS catalyzes the conversion of PRFAR and glutamine to IGP, AICAR and glutamate. The HisF subunit catalyzes the cyclization activity that produces IGP and AICAR from PRFAR using the ammonia provided by the HisH subunit. The polypeptide is Imidazole glycerol phosphate synthase subunit HisF (Shewanella sediminis (strain HAW-EB3)).